The sequence spans 336 residues: C2H2 finger domain transcription factor mtfA (336 aa).

The disordered stretch occupies residues 1–245 (MDVASLISPS…PSPGHQQMIS (245 aa)). 2 stretches are compositionally biased toward polar residues: residues 7-29 (ISPSESDTVPTFRSRSIQNSSAS) and 36-56 (EQSTGSYFSAVPTHTTSYSRT). The span at 136 to 149 (SPSTSSVSAASSSA) shows a compositional bias: low complexity. Positions 168 to 181 (TDRSSISSQGSVQH) are enriched in polar residues. A compositionally biased stretch (low complexity) spans 182–210 (AASAPYASPAPSVSSFSSPIEPSTPSTAA). The segment covering 216–245 (PAPNTFQNPSPFPQTSTASLPSPGHQQMIS) has biased composition (polar residues). C2H2-type zinc fingers lie at residues 272 to 294 (YICRTCHKAFSRPSSLRIHSHSH) and 300 to 325 (FRCTHAGCGKAFSVRSNMKRHERGCH).

It is found in the nucleus. Functionally, transcription factor that controls morphogenesis and virulence. Acts as a positive regulator of gliotixin and protease production. In Aspergillus fumigatus (strain CBS 144.89 / FGSC A1163 / CEA10) (Neosartorya fumigata), this protein is C2H2 finger domain transcription factor mtfA.